The sequence spans 617 residues: LEAF RUST 10 DISEASE-RESISTANCE LOCUS RECEPTOR-LIKE PROTEIN KINASE-like 2.4 (617 aa).

The N-terminal stretch at 1–26 is a signal peptide; that stretch reads MYYLPSSCLVLFLFFSLFYHLPCASS. The Extracellular portion of the chain corresponds to 27-243; that stretch reads KQTLGWCESQ…LPTRLSSEAK (217 aa). Asn41, Asn69, Asn86, Asn112, and Asn184 each carry an N-linked (GlcNAc...) asparagine glycan. A helical transmembrane segment spans residues 244–264; that stretch reads IATIAGVSLLPFLVLTLVVHI. Residues 265–617 lie on the Cytoplasmic side of the membrane; sequence IRKQKTSNDK…SEENSISSEI (353 aa). The Protein kinase domain occupies 307-594; that stretch reads NSFAEVVGRG…ALEVPPRPVL (288 aa). ATP contacts are provided by residues 313–321 and Lys335; that span reads VGRGGFGIV. Position 380 is a phosphotyrosine (Tyr380). Asp431 acts as the Proton acceptor in catalysis. A phosphothreonine mark is found at Thr468 and Thr471.

Belongs to the protein kinase superfamily. Ser/Thr protein kinase family.

Its subcellular location is the membrane. The catalysed reaction is L-seryl-[protein] + ATP = O-phospho-L-seryl-[protein] + ADP + H(+). It carries out the reaction L-threonyl-[protein] + ATP = O-phospho-L-threonyl-[protein] + ADP + H(+). The protein is LEAF RUST 10 DISEASE-RESISTANCE LOCUS RECEPTOR-LIKE PROTEIN KINASE-like 2.4 of Arabidopsis thaliana (Mouse-ear cress).